The chain runs to 178 residues: Peptidyl-prolyl cis-trans isomerase H (178 aa).

The 164-residue stretch at Phe14–Gln177 folds into the PPIase cyclophilin-type domain.

The protein belongs to the cyclophilin-type PPIase family. PPIase H subfamily.

Its subcellular location is the nucleus. It carries out the reaction [protein]-peptidylproline (omega=180) = [protein]-peptidylproline (omega=0). PPIases accelerate the folding of proteins. It catalyzes the cis-trans isomerization of proline imidic peptide bonds in oligopeptides. The sequence is that of Peptidyl-prolyl cis-trans isomerase H (cyp7) from Rhizopus delemar (strain RA 99-880 / ATCC MYA-4621 / FGSC 9543 / NRRL 43880) (Mucormycosis agent).